Consider the following 278-residue polypeptide: UPF0276 protein Ssed_2857 (278 aa).

Belongs to the UPF0276 family.

In Shewanella sediminis (strain HAW-EB3), this protein is UPF0276 protein Ssed_2857.